Reading from the N-terminus, the 513-residue chain is ATP synthase subunit alpha (513 aa).

169-176 (GDRQTGKT) is an ATP binding site.

This sequence belongs to the ATPase alpha/beta chains family. F-type ATPases have 2 components, CF(1) - the catalytic core - and CF(0) - the membrane proton channel. CF(1) has five subunits: alpha(3), beta(3), gamma(1), delta(1), epsilon(1). CF(0) has three main subunits: a(1), b(2) and c(9-12). The alpha and beta chains form an alternating ring which encloses part of the gamma chain. CF(1) is attached to CF(0) by a central stalk formed by the gamma and epsilon chains, while a peripheral stalk is formed by the delta and b chains.

The protein localises to the cell inner membrane. It catalyses the reaction ATP + H2O + 4 H(+)(in) = ADP + phosphate + 5 H(+)(out). Functionally, produces ATP from ADP in the presence of a proton gradient across the membrane. The alpha chain is a regulatory subunit. The protein is ATP synthase subunit alpha of Shewanella denitrificans (strain OS217 / ATCC BAA-1090 / DSM 15013).